The sequence spans 122 residues: Ribosome-binding factor A (122 aa).

The segment covering 95-111 (PTVERVTRIQRTLREVS) has biased composition (basic and acidic residues). A disordered region spans residues 95-122 (PTVERVTRIQRTLREVSGEDGDGNGTQE).

It belongs to the RbfA family. In terms of assembly, monomer. Binds 30S ribosomal subunits, but not 50S ribosomal subunits or 70S ribosomes.

Its subcellular location is the cytoplasm. In terms of biological role, one of several proteins that assist in the late maturation steps of the functional core of the 30S ribosomal subunit. Associates with free 30S ribosomal subunits (but not with 30S subunits that are part of 70S ribosomes or polysomes). Required for efficient processing of 16S rRNA. May interact with the 5'-terminal helix region of 16S rRNA. The chain is Ribosome-binding factor A from Rubrobacter xylanophilus (strain DSM 9941 / JCM 11954 / NBRC 16129 / PRD-1).